Consider the following 72-residue polypeptide: Bowman-Birk type proteinase inhibitor (72 aa).

Disulfide bonds link Cys-8–Cys-61, Cys-9–Cys-24, Cys-12–Cys-57, Cys-14–Cys-22, Cys-31–Cys-38, Cys-35–Cys-50, and Cys-40–Cys-48.

Belongs to the Bowman-Birk serine protease inhibitor family.

Functionally, this inhibitor has two domains, each with separate antiprotease activity. 1 mole of inhibitor inhibits either 1 mole of trypsin or 2 moles of chymotrypsin, stoichiometrically. In Vicia sativa subsp. nigra (Common vetch), this protein is Bowman-Birk type proteinase inhibitor.